A 211-amino-acid polypeptide reads, in one-letter code: UPF0637 protein Bsph_1379 (211 aa).

It belongs to the UPF0637 family.

This is UPF0637 protein Bsph_1379 from Lysinibacillus sphaericus (strain C3-41).